The chain runs to 123 residues: Small ribosomal subunit protein uS12 (123 aa).

D89 is subject to 3-methylthioaspartic acid. The tract at residues 101–123 (SLDTSGVKDRKQGRSKYGAKRPK) is disordered. Positions 113–123 (GRSKYGAKRPK) are enriched in basic residues.

It belongs to the universal ribosomal protein uS12 family. In terms of assembly, part of the 30S ribosomal subunit. Contacts proteins S8 and S17. May interact with IF1 in the 30S initiation complex.

In terms of biological role, with S4 and S5 plays an important role in translational accuracy. Its function is as follows. Interacts with and stabilizes bases of the 16S rRNA that are involved in tRNA selection in the A site and with the mRNA backbone. Located at the interface of the 30S and 50S subunits, it traverses the body of the 30S subunit contacting proteins on the other side and probably holding the rRNA structure together. The combined cluster of proteins S8, S12 and S17 appears to hold together the shoulder and platform of the 30S subunit. This is Small ribosomal subunit protein uS12 from Stutzerimonas stutzeri (strain A1501) (Pseudomonas stutzeri).